The following is a 559-amino-acid chain: 2,3-bisphosphoglycerate-independent phosphoglycerate mutase (559 aa).

Residues D28 and S81 each coordinate Mn(2+). The Phosphoserine intermediate role is filled by S81. Substrate-binding positions include H140, 170 to 171 (RD), R206, R213, 286 to 289 (RADR), and K361. Mn(2+)-binding residues include D430, H434, D471, H472, and H501.

Belongs to the BPG-independent phosphoglycerate mutase family. In terms of assembly, monomer. Mn(2+) serves as cofactor.

The protein resides in the cytoplasm. The catalysed reaction is (2R)-2-phosphoglycerate = (2R)-3-phosphoglycerate. The protein operates within carbohydrate degradation; glycolysis; pyruvate from D-glyceraldehyde 3-phosphate: step 3/5. Catalyzes the interconversion of 2-phosphoglycerate and 3-phosphoglycerate. The chain is 2,3-bisphosphoglycerate-independent phosphoglycerate mutase (PGM1) from Mesembryanthemum crystallinum (Common ice plant).